The following is a 162-amino-acid chain: Interleukin-15 (162 aa).

The first 29 residues, 1–29 (MRISKPYLRSTSIQCYLCLLLNSHFLAEA), serve as a signal peptide directing secretion. Residues 30-48 (GIHVFIFGCISAGLPKTEA) constitute a propeptide that is removed on maturation. 2 cysteine pairs are disulfide-bonded: Cys-83–Cys-133 and Cys-90–Cys-136. N-linked (GlcNAc...) asparagine glycosylation is found at Asn-108, Asn-119, Asn-127, and Asn-143.

Belongs to the IL-15/IL-21 family. Expressed in many tissues including heart, spleen, lung, liver, muscle and kidney (at mRNA level). Expressed in many tissues including heart, spleen, lung, liver, muscle and kidney (at protein level).

The protein localises to the secreted. Cytokine that plays a major role in the development of inflammatory and protective immune responses to microbial invaders and parasites by modulating immune cells of both the innate and adaptive immune systems. Stimulates the proliferation of natural killer cells, T-cells and B-cells and promotes the secretion of several cytokines. In monocytes, induces the production of IL8 and monocyte chemotactic protein 1/CCL2, two chemokines that attract neutrophils and monocytes respectively to sites of infection. Unlike most cytokines, which are secreted in soluble form, IL15 is expressed in association with its high affinity IL15RA on the surface of IL15-producing cells and delivers signals to target cells that express IL2RB and IL2RG receptor subunits. Binding to its receptor triggers the phosphorylation of JAK1 and JAK3 and the recruitment and subsequent phosphorylation of signal transducer and activator of transcription-3/STAT3 and STAT5. In mast cells, induces the rapid tyrosine phosphorylation of STAT6 and thereby controls mast cell survival and release of cytokines such as IL4. This chain is Interleukin-15 (IL15), found in Oryctolagus cuniculus (Rabbit).